Reading from the N-terminus, the 87-residue chain is U15-lycotoxin-Ls1f (87 aa).

Positions 1 to 20 are cleaved as a signal peptide; the sequence is MNSKIFAVLLLLGLLSCVLS. One can recognise a WAP domain in the interval 21–66; sequence DQYCPKSSITACKKMNIRNDCCKDDDCTGGSWCCATPCGNFCKYPT. Cystine bridges form between C24–C54, C32–C58, C41–C53, C42–C80, and C47–C62.

Belongs to the venom protein 11 family. 01 (wap-1) subfamily. Post-translationally, contains 5 disulfide bonds. Expressed by the venom gland.

Its subcellular location is the secreted. Has antibacterial activity. This is U15-lycotoxin-Ls1f from Lycosa singoriensis (Wolf spider).